We begin with the raw amino-acid sequence, 275 residues long: 4-hydroxy-tetrahydrodipicolinate reductase (275 aa).

NAD(+) contacts are provided by residues 13 to 18 (GAAGKM) and 108 to 110 (GTT). The active-site Proton donor/acceptor is the H164. Position 165 (H165) interacts with (S)-2,3,4,5-tetrahydrodipicolinate. K168 (proton donor) is an active-site residue. 174 to 175 (GT) serves as a coordination point for (S)-2,3,4,5-tetrahydrodipicolinate.

This sequence belongs to the DapB family.

The protein resides in the cytoplasm. It catalyses the reaction (S)-2,3,4,5-tetrahydrodipicolinate + NAD(+) + H2O = (2S,4S)-4-hydroxy-2,3,4,5-tetrahydrodipicolinate + NADH + H(+). The catalysed reaction is (S)-2,3,4,5-tetrahydrodipicolinate + NADP(+) + H2O = (2S,4S)-4-hydroxy-2,3,4,5-tetrahydrodipicolinate + NADPH + H(+). Its pathway is amino-acid biosynthesis; L-lysine biosynthesis via DAP pathway; (S)-tetrahydrodipicolinate from L-aspartate: step 4/4. Functionally, catalyzes the conversion of 4-hydroxy-tetrahydrodipicolinate (HTPA) to tetrahydrodipicolinate. The protein is 4-hydroxy-tetrahydrodipicolinate reductase of Cyanothece sp. (strain PCC 7425 / ATCC 29141).